The primary structure comprises 131 residues: Large ribosomal subunit protein bL17 (131 aa).

It belongs to the bacterial ribosomal protein bL17 family. Part of the 50S ribosomal subunit. Contacts protein L32.

The polypeptide is Large ribosomal subunit protein bL17 (Janthinobacterium sp. (strain Marseille) (Minibacterium massiliensis)).